Consider the following 233-residue polypeptide: Sugar fermentation stimulation protein homolog (233 aa).

The protein belongs to the SfsA family.

This chain is Sugar fermentation stimulation protein homolog, found in Saccharophagus degradans (strain 2-40 / ATCC 43961 / DSM 17024).